The following is a 545-amino-acid chain: ATP synthase subunit alpha (545 aa).

173–180 lines the ATP pocket; it reads GDRQTGKT.

It belongs to the ATPase alpha/beta chains family. As to quaternary structure, F-type ATPases have 2 components, CF(1) - the catalytic core - and CF(0) - the membrane proton channel. CF(1) has five subunits: alpha(3), beta(3), gamma(1), delta(1), epsilon(1). CF(0) has three main subunits: a(1), b(2) and c(9-12). The alpha and beta chains form an alternating ring which encloses part of the gamma chain. CF(1) is attached to CF(0) by a central stalk formed by the gamma and epsilon chains, while a peripheral stalk is formed by the delta and b chains.

Its subcellular location is the cell membrane. It catalyses the reaction ATP + H2O + 4 H(+)(in) = ADP + phosphate + 5 H(+)(out). Produces ATP from ADP in the presence of a proton gradient across the membrane. The alpha chain is a regulatory subunit. This chain is ATP synthase subunit alpha, found in Clavibacter michiganensis subsp. michiganensis (strain NCPPB 382).